The chain runs to 398 residues: Tryptophan synthase beta chain (398 aa).

Position 90 is an N6-(pyridoxal phosphate)lysine (lysine 90).

The protein belongs to the TrpB family. Tetramer of two alpha and two beta chains. Pyridoxal 5'-phosphate serves as cofactor.

The catalysed reaction is (1S,2R)-1-C-(indol-3-yl)glycerol 3-phosphate + L-serine = D-glyceraldehyde 3-phosphate + L-tryptophan + H2O. It functions in the pathway amino-acid biosynthesis; L-tryptophan biosynthesis; L-tryptophan from chorismate: step 5/5. In terms of biological role, the beta subunit is responsible for the synthesis of L-tryptophan from indole and L-serine. The chain is Tryptophan synthase beta chain from Anoxybacillus flavithermus (strain DSM 21510 / WK1).